A 195-amino-acid chain; its full sequence is Molybdenum cofactor guanylyltransferase (195 aa).

Residues 12–14 (LAG), Lys25, Asn53, Asp70, and Asp100 each bind GTP. Mg(2+) is bound at residue Asp100.

This sequence belongs to the MobA family. As to quaternary structure, monomer. The cofactor is Mg(2+).

Its subcellular location is the cytoplasm. The enzyme catalyses Mo-molybdopterin + GTP + H(+) = Mo-molybdopterin guanine dinucleotide + diphosphate. Transfers a GMP moiety from GTP to Mo-molybdopterin (Mo-MPT) cofactor (Moco or molybdenum cofactor) to form Mo-molybdopterin guanine dinucleotide (Mo-MGD) cofactor. This chain is Molybdenum cofactor guanylyltransferase, found in Vibrio vulnificus (strain YJ016).